We begin with the raw amino-acid sequence, 624 residues long: Bifunctional protein ArgH (624 aa).

The argininosuccinate lyase stretch occupies residues 1-466 (MALWGGRFTQ…AARDTTLVKV (466 aa)). Residues 464–614 (VKVRPARITD…DEVALEFNLS (151 aa)) enclose the N-acetyltransferase domain. The tract at residues 467–624 (RPARITDIET…EQIISQVKVA (158 aa)) is probable acetyltransferase.

It in the N-terminal section; belongs to the lyase 1 family. Argininosuccinate lyase subfamily.

The protein localises to the cytoplasm. The catalysed reaction is 2-(N(omega)-L-arginino)succinate = fumarate + L-arginine. It participates in amino-acid biosynthesis; L-arginine biosynthesis; L-arginine from L-ornithine and carbamoyl phosphate: step 3/3. This chain is Bifunctional protein ArgH (argH), found in Vibrio vulnificus (strain CMCP6).